An 89-amino-acid chain; its full sequence is Small ribosomal subunit protein uS15 (89 aa).

Belongs to the universal ribosomal protein uS15 family. Part of the 30S ribosomal subunit. Forms a bridge to the 50S subunit in the 70S ribosome, contacting the 23S rRNA.

Functionally, one of the primary rRNA binding proteins, it binds directly to 16S rRNA where it helps nucleate assembly of the platform of the 30S subunit by binding and bridging several RNA helices of the 16S rRNA. In terms of biological role, forms an intersubunit bridge (bridge B4) with the 23S rRNA of the 50S subunit in the ribosome. In Vibrio parahaemolyticus serotype O3:K6 (strain RIMD 2210633), this protein is Small ribosomal subunit protein uS15.